The primary structure comprises 366 residues: tRNA-queuosine alpha-mannosyltransferase (366 aa).

It belongs to the glycosyltransferase group 1 family. Glycosyltransferase 4 subfamily.

The protein localises to the cytoplasm. It is found in the nucleus. The enzyme catalyses queuosine(34) in tRNA(Asp) + GDP-alpha-D-mannose = O-4''-alpha-D-mannosylqueuosine(34) in tRNA(Asp) + GDP + H(+). Functionally, glycosyltransferase that specifically catalyzes mannosylation of cytoplasmic tRNA(Asp) modified with queuosine at position 34 (queuosine(34)). Mannosylates the cyclopentene moiety of queuosine(34) in tRNA(Asp) to form mannosyl-queuosine(34). Mannosylation of queuosine(34) in tRNA(Asp) is required to slow-down elongation at cognate codons, GAC and GAU, thereby regulating protein translation. The protein is tRNA-queuosine alpha-mannosyltransferase (GTDC1) of Bos taurus (Bovine).